Here is a 752-residue protein sequence, read N- to C-terminus: Glutamate carboxypeptidase 2 (752 aa).

The Cytoplasmic portion of the chain corresponds to 1-22 (MWNALQDRDSAEVLGHRQRWLR). The residue at position 10 (S10) is a Phosphoserine. The chain crosses the membrane as a helical; Signal-anchor for type II membrane protein span at residues 23-44 (VGTLVLALTGTFLIGFLFGWFI). At 45–752 (KPSNEATGNV…AAAETLREVA (708 aa)) the chain is on the extracellular side. N-linked (GlcNAc...) asparagine glycans are attached at residues N78, N123, and N155. Residues R212 and N259 each coordinate substrate. 2 residues coordinate Ca(2+): T271 and Y274. Residues 276 to 589 (ANEHAYRHEL…QVRGAMVFEL (314 aa)) are NAALADase. N338 carries N-linked (GlcNAc...) asparagine glycosylation. Zn(2+) contacts are provided by H379 and D389. E426 contributes to the substrate binding site. The active-site Nucleophile; for NAALADase activity is E426. E427 provides a ligand contact to Zn(2+). The Ca(2+) site is built by E435 and E438. Residue D455 participates in Zn(2+) binding. 2 N-linked (GlcNAc...) asparagine glycosylation sites follow: N461 and N478. Substrate is bound by residues 519 to 520 (SG), N521, 536 to 538 (RAR), Y554, and 554 to 555 (YH). H555 serves as a coordination point for Zn(2+). N615 is a glycosylation site (N-linked (GlcNAc...) asparagine). S630 acts as the Charge relay system in catalysis. The N-linked (GlcNAc...) asparagine glycan is linked to N640. Catalysis depends on charge relay system residues D668 and H691. Substrate is bound at residue 701-702 (KY). N722 is a glycosylation site (N-linked (GlcNAc...) asparagine).

This sequence belongs to the peptidase M28 family. M28B subfamily. In terms of assembly, homodimer. Zn(2+) is required as a cofactor. As to expression, expressed predominantly in the hippocampal region of the brain and in kidney. Lower levels in the ovary, testis and mandibular gland.

It is found in the cell membrane. The enzyme catalyses Release of an unsubstituted, C-terminal glutamyl residue, typically from Ac-Asp-Glu or folylpoly-gamma-glutamates.. The NAALADase and folate hydrolase activities are inhibited by quisqualic acid. In terms of biological role, has both folate hydrolase and N-acetylated-alpha-linked-acidic dipeptidase (NAALADase) activity. Has a preference for tri-alpha-glutamate peptides. In the intestine, required for the uptake of folate. In the brain, modulates excitatory neurotransmission through the hydrolysis of the neuropeptide, N-aceylaspartylglutamate (NAAG), thereby releasing glutamate. Its function is as follows. Also exhibits a dipeptidyl-peptidase IV type activity. In vitro, cleaves Gly-Pro-AMC. The protein is Glutamate carboxypeptidase 2 (Folh1) of Mus musculus (Mouse).